We begin with the raw amino-acid sequence, 217 residues long: N-(5'-phosphoribosyl)anthranilate isomerase (217 aa).

Belongs to the TrpF family.

It catalyses the reaction N-(5-phospho-beta-D-ribosyl)anthranilate = 1-(2-carboxyphenylamino)-1-deoxy-D-ribulose 5-phosphate. The protein operates within amino-acid biosynthesis; L-tryptophan biosynthesis; L-tryptophan from chorismate: step 3/5. The polypeptide is N-(5'-phosphoribosyl)anthranilate isomerase (Chlorobium luteolum (strain DSM 273 / BCRC 81028 / 2530) (Pelodictyon luteolum)).